Here is a 727-residue protein sequence, read N- to C-terminus: Telomere repeats-binding bouquet formation protein 1 (727 aa).

2 ARM repeats span residues 101–144 and 339–382; these read ELFE…RETG and NGLP…GEYP. Residues 398–446 are a coiled coil; the sequence is ENNLEEHWRKAKEILHRIEQLEREGNEEEIQRENYQDNISSMNISIQNT. Positions 457-468 are enriched in basic and acidic residues; sequence RGSKAEDEDKSH. The tract at residues 457-493 is disordered; the sequence is RGSKAEDEDKSHSRQLQSYKSHGVMSKACTNDDQMKT. An interaction with TERF1 region spans residues 523–662; it reads QNLHEETTFE…QRLSNESTTP (140 aa). Thr-648 carries the post-translational modification Phosphothreonine. Residues 666 to 719 form the Myb-like domain; sequence KKRRIRKNFTEEEVNYLFNGVKKMGNHWNSILWSFPFQQGRKAVDLAHKYHKLT.

This sequence belongs to the TERB1 family. As to quaternary structure, component of the MAJIN-TERB1-TERB2 complex, composed of MAJIN, TERB1 and TERB2. Interacts with TERF1, STAG3 and SUN1. Interacts (via Myb-like domain) with the cohesin complex; probably mediated via interaction with STAG3. Phosphorylated by CDK. Phosphorylation by CDK takes place in late prophase when the cap exchange is prominent. is important for the stabilization of telomere attachment but dispenable for the cap exchange.

It is found in the chromosome. Its subcellular location is the telomere. The protein localises to the nucleus inner membrane. Functionally, meiosis-specific telomere-associated protein involved in meiotic telomere attachment to the nucleus inner membrane, a crucial step for homologous pairing and synapsis. Component of the MAJIN-TERB1-TERB2 complex, which promotes telomere cap exchange by mediating attachment of telomeric DNA to the inner nuclear membrane and replacement of the protective cap of telomeric chromosomes: in early meiosis, the MAJIN-TERB1-TERB2 complex associates with telomeric DNA and the shelterin/telosome complex. During prophase, the complex matures and promotes release of the shelterin/telosome complex from telomeric DNA. In the MAJIN-TERB1-TERB2 complex, TERB1 probably mediates association with the shelterin/telosome complex via interaction with TERF1, promoting priming telomeric DNA attachment'. Promotes telomere association with the nuclear envelope and deposition of the SUN-KASH/LINC complex. Also recruits cohesin to telomeres to develop structural rigidity. The polypeptide is Telomere repeats-binding bouquet formation protein 1 (Homo sapiens (Human)).